A 155-amino-acid chain; its full sequence is Ribosomal RNA large subunit methyltransferase H (155 aa).

S-adenosyl-L-methionine is bound by residues L72, G103, and 122 to 127; that span reads LSPLTL.

The protein belongs to the RNA methyltransferase RlmH family. In terms of assembly, homodimer.

Its subcellular location is the cytoplasm. The catalysed reaction is pseudouridine(1915) in 23S rRNA + S-adenosyl-L-methionine = N(3)-methylpseudouridine(1915) in 23S rRNA + S-adenosyl-L-homocysteine + H(+). Its function is as follows. Specifically methylates the pseudouridine at position 1915 (m3Psi1915) in 23S rRNA. The protein is Ribosomal RNA large subunit methyltransferase H of Aeromonas hydrophila subsp. hydrophila (strain ATCC 7966 / DSM 30187 / BCRC 13018 / CCUG 14551 / JCM 1027 / KCTC 2358 / NCIMB 9240 / NCTC 8049).